A 327-amino-acid polypeptide reads, in one-letter code: Glutaminase (327 aa).

Residues S92, N143, N195, Y218, Y263, and V281 each coordinate substrate.

The protein belongs to the glutaminase family. As to quaternary structure, homotetramer.

It carries out the reaction L-glutamine + H2O = L-glutamate + NH4(+). In Synechocystis sp. (strain ATCC 27184 / PCC 6803 / Kazusa), this protein is Glutaminase.